The primary structure comprises 421 residues: Methionine aminopeptidase 2 (421 aa).

The disordered stretch occupies residues 1–53 (MTDAEIENSPASDLKELNLENEGVEQQDQAKADESDPVESKKKKNKKKKKKKS). Residues 28–40 (DQAKADESDPVES) show a composition bias toward basic and acidic residues. Ser35 is modified (phosphoserine). A compositionally biased stretch (basic residues) spans 41 to 53 (KKKKNKKKKKKKS). Residue His174 participates in substrate binding. A divalent metal cation is bound by residues Asp194, Asp205, and His274. His282 lines the substrate pocket. Residues Glu307 and Glu402 each contribute to the a divalent metal cation site.

This sequence belongs to the peptidase M24A family. Methionine aminopeptidase eukaryotic type 2 subfamily. The cofactor is Co(2+). Zn(2+) serves as cofactor. Requires Mn(2+) as cofactor. Fe(2+) is required as a cofactor.

It is found in the cytoplasm. The enzyme catalyses Release of N-terminal amino acids, preferentially methionine, from peptides and arylamides.. In terms of biological role, cotranslationally removes the N-terminal methionine from nascent proteins. The N-terminal methionine is often cleaved when the second residue in the primary sequence is small and uncharged (Met-Ala-, Cys, Gly, Pro, Ser, Thr, or Val). This chain is Methionine aminopeptidase 2, found in Saccharomyces cerevisiae (strain RM11-1a) (Baker's yeast).